The primary structure comprises 1101 residues: ATP-dependent DNA helicase mph1 (1101 aa).

4 disordered regions span residues Pro-22 to Arg-59, Leu-95 to Asp-138, Phe-154 to Pro-231, and Ser-250 to His-270. Polar residues predominate over residues Thr-24–Gly-48. A compositionally biased stretch (low complexity) spans Thr-170–Pro-190. Acidic residues predominate over residues Phe-191–Asp-202. The segment covering Pro-209–Thr-228 has biased composition (polar residues). A Helicase ATP-binding domain is found at Ile-296–Lys-464. Leu-309–Thr-316 serves as a coordination point for ATP. A DEAH box motif is present at residues Asp-412–His-415. The Helicase C-terminal domain maps to Tyr-634–Lys-808. Disordered regions lie at residues Arg-824–Glu-890 and Ser-991–Phe-1067. The segment covering Arg-842–Phe-854 has biased composition (basic residues).

This sequence belongs to the DEAD box helicase family. DEAH subfamily. FANCM sub-subfamily. Interacts with the MHF histone-fold complex to form the FANCM-MHF complex.

The protein localises to the nucleus. The catalysed reaction is ATP + H2O = ADP + phosphate + H(+). ATP-dependent DNA helicase involved in DNA damage repair by homologous recombination and in genome maintenance. Capable of unwinding D-loops. Plays a role in limiting crossover recombinants during mitotic DNA double-strand break (DSB) repair. Component of a FANCM-MHF complex which promotes gene conversion at blocked replication forks, probably by reversal of the stalled fork. This Aspergillus fumigatus (strain CBS 144.89 / FGSC A1163 / CEA10) (Neosartorya fumigata) protein is ATP-dependent DNA helicase mph1.